Consider the following 377-residue polypeptide: Chaperone protein DnaJ (377 aa).

A J domain is found at 5 to 70 (DYYEILGVSR…QKRAAYDQYG (66 aa)). A CR-type zinc finger spans residues 132-210 (GVTKEIRIPT…CHGHGRIEKS (79 aa)). Residues Cys-145, Cys-148, Cys-162, Cys-165, Cys-184, Cys-187, Cys-198, and Cys-201 each coordinate Zn(2+). CXXCXGXG motif repeat units follow at residues 145–152 (CDVCHGSG), 162–169 (CPTCHGAG), 184–191 (CPHCHGRG), and 198–205 (CNKCHGHG).

The protein belongs to the DnaJ family. As to quaternary structure, homodimer. Zn(2+) serves as cofactor.

It localises to the cytoplasm. In terms of biological role, participates actively in the response to hyperosmotic and heat shock by preventing the aggregation of stress-denatured proteins and by disaggregating proteins, also in an autonomous, DnaK-independent fashion. Unfolded proteins bind initially to DnaJ; upon interaction with the DnaJ-bound protein, DnaK hydrolyzes its bound ATP, resulting in the formation of a stable complex. GrpE releases ADP from DnaK; ATP binding to DnaK triggers the release of the substrate protein, thus completing the reaction cycle. Several rounds of ATP-dependent interactions between DnaJ, DnaK and GrpE are required for fully efficient folding. Also involved, together with DnaK and GrpE, in the DNA replication of plasmids through activation of initiation proteins. The protein is Chaperone protein DnaJ of Edwardsiella ictaluri (strain 93-146).